The following is a 783-amino-acid chain: Protein SEY1 (783 aa).

Over 1 to 677 (MTSQAIQLID…KRSIVTSSTH (677 aa)) the chain is Cytoplasmic. The GB1/RHD3-type G domain maps to 33-265 (GFNYHVISVF…YLLKPNYHHK (233 aa)). Residue 43–50 (GSQSSGKS) participates in GTP binding. Positions 449 to 472 (HEKKLQLRESELNALLSKIKKQLT) form a coiled coil. Residues 678–698 (IPIWIYAVIVVLGWNEFMIVI) traverse the membrane as a helical segment. Residues 699 to 701 (RNP) are Lumenal-facing. The chain crosses the membrane as a helical span at residues 702 to 722 (LFVTLALLSIVSFYFIQKFGL). The Cytoplasmic segment spans residues 723 to 783 (WGPVMNVVNT…SSSSGNEDSD (61 aa)).

It belongs to the TRAFAC class dynamin-like GTPase superfamily. GB1/RHD3 GTPase family. RHD3 subfamily.

It localises to the endoplasmic reticulum membrane. Functionally, cooperates with the reticulon proteins and tubule-shaping DP1 family proteins to generate and maintain the structure of the tubular endoplasmic reticulum network. Has GTPase activity, which is required for its function in ER organization. In Candida glabrata (strain ATCC 2001 / BCRC 20586 / JCM 3761 / NBRC 0622 / NRRL Y-65 / CBS 138) (Yeast), this protein is Protein SEY1.